The chain runs to 144 residues: Large ribosomal subunit protein uL16 (144 aa).

Residues 1 to 19 (MLLPKRVKYRRQHRPKTTG) show a composition bias toward basic residues. The disordered stretch occupies residues 1–23 (MLLPKRVKYRRQHRPKTTGRSKG).

The protein belongs to the universal ribosomal protein uL16 family. As to quaternary structure, part of the 50S ribosomal subunit.

Its function is as follows. Binds 23S rRNA and is also seen to make contacts with the A and possibly P site tRNAs. This is Large ribosomal subunit protein uL16 from Staphylococcus epidermidis (strain ATCC 35984 / DSM 28319 / BCRC 17069 / CCUG 31568 / BM 3577 / RP62A).